The chain runs to 417 residues: Methyltransferase/ribosomally synthesized cyclic peptide lentinulin A precursor ledMA (417 aa).

Residues 1-251 form a methyltransferase domain region; sequence METPTLNKSG…GVSTFYIPPK (251 aa). Residues Arg-72, Tyr-76, and Tyr-98 contribute to the active site. Residues Tyr-98, His-100, Val-103, Ala-130, Gln-172, Ala-213, Ser-244, and Thr-245 each coordinate S-adenosyl-L-methionine. Residues 252–378 are clasp domain; the sequence is ERKEINVDII…WAFRCAMKEM (127 aa). The segment at 379–399 is precursor leader; that stretch reads PISLLDNAKQSMEEASEQGFP. Ile-401 carries the N-methylisoleucine modification. Residues Val-403 and Val-404 each carry the N-methylvaline modification. Position 405 is an N-methylglycine (Gly-405). N-methylvaline occurs at positions 406 and 407. Gly-408 is modified (N-methylglycine). Val-410 is modified (N-methylvaline). Residue Gly-411 is modified to N-methylglycine. At Val-413 the chain carries N-methylvaline.

This sequence in the N-terminal section; belongs to the precorrin methyltransferase family. Homodimer. Post-translationally, ledMA automethylates at Ile-401, Val-403, Val-404, Gly-405, Val-406, Val-407, Gly-408, Val-410, Gly-411 and Val-413 before being processed by the prolyloligopeptidase ledP which likely forms a peptidyl ester upon removal of the follower propeptide, which then undergoes macrocyclization with the N-terminus of the modified core peptide. Peptide backbone alpha-N-methylations change the physicochemical properties of amide bonds to provide structural constraints and other favorable characteristics including biological membrane permeability to peptides.

It functions in the pathway mycotoxin biosynthesis. In terms of biological role, fusion protein of the methyltransferase ledM and the lentinulin A core peptide; part of the gene cluster that mediates the biosynthesis of lentinulin A, a highly methylated cyclic dodecapeptide with nematodicidal activity. Lentinulin A derives from the C-terminus of the ledMA protein, and it is the ledMA protein that methylates its own C-terminus using S-adenosyl methionine (SAM). The C-terminus is subsequently cleaved off and macrocyclized by the prolyloligopeptidase ledP to give the final product. This Lentinula edodes (Shiitake mushroom) protein is Methyltransferase/ribosomally synthesized cyclic peptide lentinulin A precursor ledMA.